Consider the following 565-residue polypeptide: MFANALMLLGLLILLLLILAPLLGSLLSRLIDGEPYRAMARTENTLWRLCGVTPHEMDWRHYLLAILAFNLLGIVLLFALLMAQGLLPLNPQGFPGLRWDLALNTAVSFVTNTNWQAYSGESSLSYLSQMAGLGVQNFLSAASGIAVLFALIRAFARHADPSLGNAWVDLWRITLYVLLPLSLLLSLLFVSQGVIQNVSGYVSVTSLEGGSQLLPMGPVASQEAIKLLGTNGGGFFGANSAHPFENPTALSNLLQMVAIFLLPTALCFAFGRSVGDSRQGHALLWTMSLIFIVAAGCVMYAELQGNPHLMALGTDSNGNMEGKENRFGILASALYAVVTTAASCGAVNAMHDSFTALGGMVPMWLMQIGEVVFGGAGSGLYGMLLFVLLTVFIAGLMIGRTPEYLGKKITVFEVKMTALAILIPPALVLTGSAIALLCDAGRSAIHNPGAHGFSEVLYAFSSAANNNGSAFGGLSVNTPFYNLLLALVMLIGRFGVIIPVMAIAGALALKKRQPAGNGTLASHGALFVSLLIGTILLVGALTFIPALALGPVAEQLQNTRAHIQP.

A run of 12 helical transmembrane segments spans residues 6–26, 63–83, 132–152, 175–195, 250–270, 283–303, 327–347, 354–374, 379–399, 418–438, 483–503, and 524–544; these read LMLL…LGSL, LLAI…LLMA, GLGV…FALI, LYVL…QGVI, LSNL…CFAF, LLWT…YAEL, FGIL…CGAV, FTAL…VVFG, GLYG…LMIG, ALAI…ALLC, LLLA…VMAI, and GALF…LTFI.

Belongs to the KdpA family. As to quaternary structure, the system is composed of three essential subunits: KdpA, KdpB and KdpC.

Its subcellular location is the cell inner membrane. Functionally, part of the high-affinity ATP-driven potassium transport (or Kdp) system, which catalyzes the hydrolysis of ATP coupled with the electrogenic transport of potassium into the cytoplasm. This subunit binds the periplasmic potassium ions and delivers the ions to the membrane domain of KdpB through an intramembrane tunnel. This Edwardsiella ictaluri (strain 93-146) protein is Potassium-transporting ATPase potassium-binding subunit.